Here is a 283-residue protein sequence, read N- to C-terminus: Putative pyruvate, phosphate dikinase regulatory protein (283 aa).

156-163 (GLSRAGKT) is an ADP binding site.

It belongs to the pyruvate, phosphate/water dikinase regulatory protein family. PDRP subfamily.

It carries out the reaction N(tele)-phospho-L-histidyl/L-threonyl-[pyruvate, phosphate dikinase] + ADP = N(tele)-phospho-L-histidyl/O-phospho-L-threonyl-[pyruvate, phosphate dikinase] + AMP + H(+). It catalyses the reaction N(tele)-phospho-L-histidyl/O-phospho-L-threonyl-[pyruvate, phosphate dikinase] + phosphate + H(+) = N(tele)-phospho-L-histidyl/L-threonyl-[pyruvate, phosphate dikinase] + diphosphate. Its function is as follows. Bifunctional serine/threonine kinase and phosphorylase involved in the regulation of the pyruvate, phosphate dikinase (PPDK) by catalyzing its phosphorylation/dephosphorylation. The chain is Putative pyruvate, phosphate dikinase regulatory protein from Desulfotalea psychrophila (strain LSv54 / DSM 12343).